A 397-amino-acid chain; its full sequence is MLKDIFFEQVKPAYGCTEPIAIALSTAVGKKYSKGNVKSINITLDKNTYKNGLVVNIPGTNTFGLELAAALGYLCGDGNKGLEVLKDINEDCLKKAMKMKNMVNISLNEEQHLFVNTTIIAENTVQIVIEGKHDNIAKIVVNDKVIKNEEFHPGMTSIEKIKNYSLDKIIKYVEHPDEDVLKYVEKAIDMNLKIAEYGINTKGNFSNAAINEYVKYVSAGVDARMSGVLMPVMTVAGSGNQGLACILPIAIFKGKVEREKLLKATLLSILVTIYIKAYTGLLTPICGAGSISSAGAAAGLTYLKGGNNTQIKNAINDTLGTLFGLTCDGAKRGCALKAITGTFTALQVSSLALNNIDVPCGNGIVAKDVEETIRRVEKLTNSVKNFDKDVLDYIGKC.

Belongs to the UPF0597 family.

The chain is UPF0597 protein Tmel_1007 from Thermosipho melanesiensis (strain DSM 12029 / CIP 104789 / BI429).